We begin with the raw amino-acid sequence, 142 residues long: Transcriptional regulator MraZ (142 aa).

SpoVT-AbrB domains follow at residues 5–51 (ASSL…PRPV) and 77–120 (ASDV…DAAR).

The protein belongs to the MraZ family. Forms oligomers.

The protein resides in the cytoplasm. It is found in the nucleoid. This Herminiimonas arsenicoxydans protein is Transcriptional regulator MraZ.